The sequence spans 527 residues: Glutamate--cysteine ligase (527 aa).

This sequence belongs to the glutamate--cysteine ligase type 1 family. Type 1 subfamily.

The enzyme catalyses L-cysteine + L-glutamate + ATP = gamma-L-glutamyl-L-cysteine + ADP + phosphate + H(+). It functions in the pathway sulfur metabolism; glutathione biosynthesis; glutathione from L-cysteine and L-glutamate: step 1/2. This chain is Glutamate--cysteine ligase, found in Bordetella parapertussis (strain 12822 / ATCC BAA-587 / NCTC 13253).